A 177-amino-acid chain; its full sequence is Large ribosomal subunit protein eL20 (177 aa).

Belongs to the eukaryotic ribosomal protein eL20 family.

The chain is Large ribosomal subunit protein eL20 (RpL18A) from Drosophila melanogaster (Fruit fly).